We begin with the raw amino-acid sequence, 481 residues long: MTQYTLKQASVLLQSKQISAVELASAYLAAIAEKNPALNGYITIDQDKTLAEARAADERIAQGNASALTGVPVAYKDIFCQTGWRSACASKMLDNFISPYTATVVQNLLDEGMVTLGRTNMDEFAMGSTNENSFYGAAKNPWNPEHVPGGSSGGSAAVVAARLAPAALGSDTGGSIRQPASHCGITGIKPTYGTVSRFGMVAYASSFDQAGPMAQTAEDCAILLNAITGFDPKDSTSLEREKEDYTRDLNQPLKGVKIGLPKEYFGEGNSADVLTALQNTIDLLKAQGAELIEVSLPQTKLSIPAYYVLASAEAGTNLSRYDGVRYGHRAAQFADLEEMYGKTRAEGFGSEVKRRIMIGTYVLSHGYYDAYYLKAQKLRRLVADDFQTAFARCDLILAPTAPTAAPKIGADASPVETYLSDIYTIAVNLAGLPALTLPAGFSGGGLPVGVQLVGNYFAEAKILGAAHQIQLNSDWHGKRPE.

Residues K76 and S151 each act as charge relay system in the active site. Residue S175 is the Acyl-ester intermediate of the active site.

It belongs to the amidase family. GatA subfamily. In terms of assembly, heterotrimer of A, B and C subunits.

The catalysed reaction is L-glutamyl-tRNA(Gln) + L-glutamine + ATP + H2O = L-glutaminyl-tRNA(Gln) + L-glutamate + ADP + phosphate + H(+). In terms of biological role, allows the formation of correctly charged Gln-tRNA(Gln) through the transamidation of misacylated Glu-tRNA(Gln) in organisms which lack glutaminyl-tRNA synthetase. The reaction takes place in the presence of glutamine and ATP through an activated gamma-phospho-Glu-tRNA(Gln). The protein is Glutamyl-tRNA(Gln) amidotransferase subunit A of Neisseria meningitidis serogroup C / serotype 2a (strain ATCC 700532 / DSM 15464 / FAM18).